A 599-amino-acid chain; its full sequence is UPF0313 protein UNCMA_01890 (599 aa).

The 277-residue stretch at 281–557 (EDIPALRTVR…RALLQYKNPE (277 aa)) folds into the Radical SAM core domain. Residues cysteine 299, cysteine 303, and cysteine 306 each coordinate [4Fe-4S] cluster.

The protein belongs to the UPF0313 family. [4Fe-4S] cluster serves as cofactor.

This is UPF0313 protein UNCMA_01890 from Methanocella arvoryzae (strain DSM 22066 / NBRC 105507 / MRE50).